We begin with the raw amino-acid sequence, 213 residues long: Uridine kinase (213 aa).

15-22 lines the ATP pocket; the sequence is GASASGKS.

This sequence belongs to the uridine kinase family.

The protein resides in the cytoplasm. It catalyses the reaction uridine + ATP = UMP + ADP + H(+). The catalysed reaction is cytidine + ATP = CMP + ADP + H(+). It participates in pyrimidine metabolism; CTP biosynthesis via salvage pathway; CTP from cytidine: step 1/3. Its pathway is pyrimidine metabolism; UMP biosynthesis via salvage pathway; UMP from uridine: step 1/1. This is Uridine kinase from Escherichia fergusonii (strain ATCC 35469 / DSM 13698 / CCUG 18766 / IAM 14443 / JCM 21226 / LMG 7866 / NBRC 102419 / NCTC 12128 / CDC 0568-73).